A 741-amino-acid chain; its full sequence is NAD(P)H-quinone oxidoreductase subunit 5, chloroplastic (741 aa).

18 helical membrane-spanning segments follow: residues 9–29, 40–60, 89–109, 124–144, 147–167, 185–205, 218–238, 258–278, 286–306, 327–347, 354–374, 395–415, 427–447, 550–570, 601–621, 651–671, 687–707, and 719–739; these read WIVP…SLFF, WALI…NLFL, IDPL…MVMI, FFAY…SPNL, IYIF…FWFT, GDFG…SFEF, IDGV…LGPV, TPIS…FLVA, ALPL…LLGA, LGYM…FHLI, ALLF…VGYC, GITF…ACFW, YSPI…FYMF, FPLV…VPFF, FFID…IACI, IIYN…IILI, WAID…GEGM, and IFFS…SFSF.

This sequence belongs to the complex I subunit 5 family. In terms of assembly, NDH is composed of at least 16 different subunits, 5 of which are encoded in the nucleus.

The protein resides in the plastid. It is found in the chloroplast thylakoid membrane. The catalysed reaction is a plastoquinone + NADH + (n+1) H(+)(in) = a plastoquinol + NAD(+) + n H(+)(out). The enzyme catalyses a plastoquinone + NADPH + (n+1) H(+)(in) = a plastoquinol + NADP(+) + n H(+)(out). In terms of biological role, NDH shuttles electrons from NAD(P)H:plastoquinone, via FMN and iron-sulfur (Fe-S) centers, to quinones in the photosynthetic chain and possibly in a chloroplast respiratory chain. The immediate electron acceptor for the enzyme in this species is believed to be plastoquinone. Couples the redox reaction to proton translocation, and thus conserves the redox energy in a proton gradient. In Cryptomeria japonica (Japanese cedar), this protein is NAD(P)H-quinone oxidoreductase subunit 5, chloroplastic (ndhF).